The following is a 267-amino-acid chain: Hydrolase FUB4 (267 aa).

Residues Ser-93, Asp-183, and His-243 each act as charge relay system in the active site.

The protein belongs to the AB hydrolase 3 family.

The protein operates within mycotoxin biosynthesis. Its function is as follows. Hydrolase; part of the gene cluster that mediates the biosynthesis of fusaric acid, a mycotoxin with low to moderate toxicity to animals and humans, but with high phytotoxic properties. L-aspartate is suggested as fusaric acid amino acid precursor that is activated and further processed to O-acetyl-L-homoserine by cluster enzymes aspartate kinase FUB3 and homoserine O-acetyltransferase FUB5, as well as enzymes of the primary metabolism. The polyketide synthase (PKS) FUB1 generates the triketide trans-2-hexenal which is presumptively released by the hydrolase FUB4 and linked to the NRPS-bound amino acid precursor by NAD(P)-dependent dehydrogenase FUB6. FUB1, FUB4, and the non-canonical NRPS Fub8 may form an enzyme complex. Further processing of the NRPS-bound intermediate might be carried out by FUB6 and the sulfhydrylase FUB7, enabling a spontaneous electrocyclization to close the carbon backbone of fusaric acid. Dihydrofusaric acid is likely to be released via reduction by the thioester reductase (TR) domain of FUB8 whereupon the final oxidation to fusaric acid may (also) be performed by the FMN-dependent dehydrogenase FUB9. In Gibberella moniliformis (strain M3125 / FGSC 7600) (Maize ear and stalk rot fungus), this protein is Hydrolase FUB4.